Reading from the N-terminus, the 428-residue chain is Hemagglutinin-esterase (428 aa).

A signal peptide spans 1 to 19 (MCIAMAPRTLLLLIXCQLV). Positions 9–129 (TLLLLIXCQL…DNKRWMGNKA (121 aa)) are esterase domain 1. The Virion surface segment spans residues 20–404 (FGFNEPLNIV…PVCIYDPLPV (385 aa)). Ser42 functions as the Nucleophile in the catalytic mechanism. Cys46 and Cys67 form a disulfide bridge. N-linked (GlcNAc...) asparagine; by host glycosylation is found at Asn91, Asn149, Asn193, Asn243, and Asn313. Cys115 and Cys164 are disulfide-bonded. A receptor binding region spans residues 130-278 (RFYARVYEKM…GNYKAVSLEY (149 aa)). 2 cysteine pairs are disulfide-bonded: Cys199–Cys288 and Cys207–Cys261. The tract at residues 279–392 (LLSLPSKAIC…HCPTAANIGY (114 aa)) is esterase domain 2. Cysteines 319 and 324 form a disulfide. Residues Asn328 and Asn332 are each glycosylated (N-linked (GlcNAc...) asparagine; by host). Catalysis depends on charge relay system residues Asp339 and His342. Residues Asn357 and Asn371 are each glycosylated (N-linked (GlcNAc...) asparagine; by host). Residues Cys360 and Cys384 are joined by a disulfide bond. The chain crosses the membrane as a helical span at residues 405-425 (ILLGVLLGIAVLIIVFLNVLF). Over 426–428 (YDG) the chain is Intravirion.

Belongs to the influenza type C/coronaviruses hemagglutinin-esterase family. As to quaternary structure, homodimer; disulfide-linked. Forms a complex with the M protein in the pre-Golgi. Associates then with S-M complex to form a ternary complex S-M-HE. In terms of processing, N-glycosylated in the RER. N-glycosylated in the host RER.

It is found in the virion membrane. The protein resides in the host cell membrane. It carries out the reaction N-acetyl-9-O-acetylneuraminate + H2O = N-acetylneuraminate + acetate + H(+). It catalyses the reaction N-acetyl-4-O-acetylneuraminate + H2O = N-acetylneuraminate + acetate + H(+). Its function is as follows. Structural protein that makes short spikes at the surface of the virus. Contains receptor binding and receptor-destroying activities. Mediates de-O-acetylation of N-acetyl-4-O-acetylneuraminic acid, which is probably the receptor determinant recognized by the virus on the surface of erythrocytes and susceptible cells. This receptor-destroying activity is important for virus release as it probably helps preventing self-aggregation and ensures the efficient spread of the progeny virus from cell to cell. May serve as a secondary viral attachment protein for initiating infection, the spike protein being the major one. May become a target for both the humoral and the cellular branches of the immune system. The polypeptide is Hemagglutinin-esterase (Mus musculus (Mouse)).